A 126-amino-acid polypeptide reads, in one-letter code: Small ribosomal subunit protein uS13 (126 aa).

The tract at residues 91-126 (HRAGLPVRGQRTRTNSRTRRSAKRTVAGKKKAPSKK) is disordered. Residues 100 to 126 (QRTRTNSRTRRSAKRTVAGKKKAPSKK) are compositionally biased toward basic residues.

The protein belongs to the universal ribosomal protein uS13 family. In terms of assembly, part of the 30S ribosomal subunit. Forms a loose heterodimer with protein S19. Forms two bridges to the 50S subunit in the 70S ribosome.

In terms of biological role, located at the top of the head of the 30S subunit, it contacts several helices of the 16S rRNA. In the 70S ribosome it contacts the 23S rRNA (bridge B1a) and protein L5 of the 50S subunit (bridge B1b), connecting the 2 subunits; these bridges are implicated in subunit movement. Contacts the tRNAs in the A and P-sites. The polypeptide is Small ribosomal subunit protein uS13 (Acaryochloris marina (strain MBIC 11017)).